The sequence spans 428 residues: Elongation factor 1-alpha (428 aa).

In terms of domain architecture, tr-type G spans 5-225 (KPILNVAFIG…DAFQPPEKPT (221 aa)). Residues 14–21 (GHVDAGKS) are G1. 14–21 (GHVDAGKS) contacts GTP. Mg(2+) is bound at residue S21. Residues 70–74 (GVTID) are G2. A G3 region spans residues 91–94 (DCPG). GTP is bound by residues 91 to 95 (DCPGH) and 149 to 152 (NKMD). The tract at residues 149 to 152 (NKMD) is G4. Positions 189 to 191 (ASL) are G5.

This sequence belongs to the TRAFAC class translation factor GTPase superfamily. Classic translation factor GTPase family. EF-Tu/EF-1A subfamily.

Its subcellular location is the cytoplasm. The enzyme catalyses GTP + H2O = GDP + phosphate + H(+). Functionally, GTP hydrolase that promotes the GTP-dependent binding of aminoacyl-tRNA to the A-site of ribosomes during protein biosynthesis. In Methanococcus maripaludis (strain C5 / ATCC BAA-1333), this protein is Elongation factor 1-alpha.